The primary structure comprises 159 residues: Transcription elongation factor GreA (159 aa).

The stretch at 43-75 (LSENAEYDAAREEQSQLEAKIGEIENKLASATI) forms a coiled coil.

Belongs to the GreA/GreB family.

Functionally, necessary for efficient RNA polymerase transcription elongation past template-encoded arresting sites. The arresting sites in DNA have the property of trapping a certain fraction of elongating RNA polymerases that pass through, resulting in locked ternary complexes. Cleavage of the nascent transcript by cleavage factors such as GreA or GreB allows the resumption of elongation from the new 3'terminus. GreA releases sequences of 2 to 3 nucleotides. The sequence is that of Transcription elongation factor GreA from Chlorobaculum tepidum (strain ATCC 49652 / DSM 12025 / NBRC 103806 / TLS) (Chlorobium tepidum).